Here is a 313-residue protein sequence, read N- to C-terminus: Potassium channel subfamily K member 6 (313 aa).

The Cytoplasmic portion of the chain corresponds to 1 to 4 (MRRG). A helical membrane pass occupies residues 5 to 25 (ALLASALAAYAGYLALGALLV). Residues N79 and N85 are each glycosylated (N-linked (GlcNAc...) asparagine). Residues 90–115 (AWDFASALFFASTLVTTVGYGYTTPL) constitute an intramembrane region (pore-forming). K(+) is bound by residues T106, V107, G108, and Y109. The selectivity filter 1 stretch occupies residues 106 to 111 (TVGYGY). A helical transmembrane segment spans residues 121–141 (AFSIVFALLGVPITMLLLTAS). Over 142–172 (AQRLSLLLTHAPLSWLSLHWGWPPQRAARWH) the chain is Cytoplasmic. A helical membrane pass occupies residues 173 to 193 (LVALLMVIVAIFFLVPAAVFA). An intramembrane region (pore-forming) is located at residues 199 to 223 (WSFLDAFYFCFISLSTIGLGDYVPG). The K(+) site is built by T214, I215, and G216. The interval 214–219 (TIGLGD) is selectivity filter 2. Residues 236–256 (VLVTAYLFLGLVAMVLVLQTF) traverse the membrane as a helical segment. Residues 257-313 (RRVSDLHGLTELILLPDPDPASLSQDEDDQVAVLDARTDLHQHLSAASHADYASIPR) lie on the Cytoplasmic side of the membrane. 2 short sequence motifs (lysosomal targeting signal) span residues 282 to 290 (DEDDQVAVL) and 308 to 312 (YASIP).

Belongs to the two pore domain potassium channel (TC 1.A.1.8) family. Homodimer; disulfide-linked. Post-translationally, N-glycosylation is necessary for targeting to lysosomes.

The protein localises to the late endosome membrane. The protein resides in the lysosome membrane. It catalyses the reaction K(+)(in) = K(+)(out). Its function is as follows. K(+) channel that conducts outward rectifying currents at the membranes of the endolysosomal system. Active in lysosomes where it regulates lysosome numbers and size. In macrophages, enables K(+) efflux coupled to ATP-induced NLRP3 inflammasome activation upon bacterial infection. Cooperates with ATP-gated P2RX7 to activate NLRP3 inflammasome, with P2RX7 conducting Ca(2+) and Na(+) influx that sets the membrane potential for K(+) efflux. The protein is Potassium channel subfamily K member 6 of Mus musculus (Mouse).